Here is a 424-residue protein sequence, read N- to C-terminus: Putative pachytene checkpoint protein 2 (424 aa).

179 to 186 (GPPGTGKT) is a binding site for ATP.

Belongs to the AAA ATPase family. PCH2 subfamily.

Plays a key role in chromosome recombination during meiosis. The protein is Putative pachytene checkpoint protein 2 (pch-2) of Caenorhabditis elegans.